The following is a 392-amino-acid chain: Zinc finger protein CONSTANS-LIKE 7 (392 aa).

Zn(2+) is bound by residues Cys-22, Cys-25, Cys-46, and His-51. The B box-type; atypical zinc finger occupies 22–65 (CDACMKRSRASWYCPADDAFLCQSCDASIHSANHLAKRHERVRL). The stretch at 226–254 (KEENKVGFEINCKDLKRVKDEDEEEEEAK) forms a coiled coil. Disordered regions lie at residues 246-271 (EDEE…SNDK) and 326-346 (SDGS…GERE). Residues 259 to 271 (GSKDSDREASNDK) show a composition bias toward basic and acidic residues. The 43-residue stretch at 345–387 (REARVLRYKEKRRTRLFSKKIRYEVRKLNAEQRPRIKGRFVKR) folds into the CCT domain.

The protein belongs to the CONSTANS family.

The protein resides in the nucleus. The sequence is that of Zinc finger protein CONSTANS-LIKE 7 (COL7) from Arabidopsis thaliana (Mouse-ear cress).